We begin with the raw amino-acid sequence, 60 residues long: MSNFSVFLIALLFCSVFILSEAQIYTSKECNGSSECYSHCEGITGKRSGKCINKKCYCYR.

Positions 1 to 22 are cleaved as a signal peptide; it reads MSNFSVFLIALLFCSVFILSEA. 3 cysteine pairs are disulfide-bonded: Cys30-Cys51, Cys36-Cys56, and Cys40-Cys58.

It belongs to the short scorpion toxin superfamily. Potassium channel inhibitor family. As to expression, expressed by the venom gland.

The protein resides in the secreted. Functionally, recombinant toxin selectively inhibits Kv1.3/KCNA3 potassium channels with an IC(50) of 91 pM. The chain is Potassium channel toxin ImKTx88 from Isometrus maculatus (Lesser brown scorpion).